Here is a 688-residue protein sequence, read N- to C-terminus: UvrABC system protein C (688 aa).

Residues 11 to 90 (LTPGVYLYKD…IKKHRPRYNI (80 aa)) form the GIY-YIG domain. The region spanning 200 to 235 (GELVDALRTEMEAASQGLDFERAAVLRDRIRALERT) is the UVR domain.

This sequence belongs to the UvrC family. Interacts with UvrB in an incision complex.

It localises to the cytoplasm. Functionally, the UvrABC repair system catalyzes the recognition and processing of DNA lesions. UvrC both incises the 5' and 3' sides of the lesion. The N-terminal half is responsible for the 3' incision and the C-terminal half is responsible for the 5' incision. This is UvrABC system protein C from Nitratidesulfovibrio vulgaris (strain ATCC 29579 / DSM 644 / CCUG 34227 / NCIMB 8303 / VKM B-1760 / Hildenborough) (Desulfovibrio vulgaris).